We begin with the raw amino-acid sequence, 263 residues long: MLIWSPKGRAAAGVVASVLFIVFFFLPLAVILMSSLSQRWNGILPSGFTLNHFVNALHGAAWDALLASLTIGFCASLFALLCGVWAALALRQYGVKTQKWLSMVFYLPSAIPSVSVGLGILVAFSQGPLQMNGTLWIVLTAHFVLISAFTFSNVSTGLARISADIENVASSLGASPWYRLRHVTLPLLMPWMVSELALSLSLSMGELGATVMIYPPGWTTLPVAIFSLTDRGNIADGAALTIVLVAITLLLMMKLERIAKRLG.

6 helical membrane-spanning segments follow: residues 13 to 33, 69 to 89, 104 to 124, 131 to 151, 185 to 205, and 233 to 253; these read GVVA…VILM, LTIG…AALA, VFYL…LVAF, MNGT…AFTF, LPLL…LSMG, and NIAD…LLMM. Positions 65–253 constitute an ABC transmembrane type-1 domain; that stretch reads LLASLTIGFC…LVAITLLLMM (189 aa).

Belongs to the binding-protein-dependent transport system permease family.

It localises to the cell inner membrane. Its function is as follows. Probably part of the PhnSTUV complex (TC 3.A.1.11.5) involved in 2-aminoethylphosphonate import. Probably responsible for the translocation of the substrate across the membrane. This Salmonella typhi protein is Putative 2-aminoethylphosphonate transport system permease protein PhnV (phnV).